A 181-amino-acid polypeptide reads, in one-letter code: ATP synthase subunit delta (181 aa).

It belongs to the ATPase delta chain family. In terms of assembly, F-type ATPases have 2 components, F(1) - the catalytic core - and F(0) - the membrane proton channel. F(1) has five subunits: alpha(3), beta(3), gamma(1), delta(1), epsilon(1). F(0) has three main subunits: a(1), b(2) and c(10-14). The alpha and beta chains form an alternating ring which encloses part of the gamma chain. F(1) is attached to F(0) by a central stalk formed by the gamma and epsilon chains, while a peripheral stalk is formed by the delta and b chains.

The protein resides in the cell inner membrane. In terms of biological role, f(1)F(0) ATP synthase produces ATP from ADP in the presence of a proton or sodium gradient. F-type ATPases consist of two structural domains, F(1) containing the extramembraneous catalytic core and F(0) containing the membrane proton channel, linked together by a central stalk and a peripheral stalk. During catalysis, ATP synthesis in the catalytic domain of F(1) is coupled via a rotary mechanism of the central stalk subunits to proton translocation. Its function is as follows. This protein is part of the stalk that links CF(0) to CF(1). It either transmits conformational changes from CF(0) to CF(1) or is implicated in proton conduction. The polypeptide is ATP synthase subunit delta (Mannheimia succiniciproducens (strain KCTC 0769BP / MBEL55E)).